A 53-amino-acid polypeptide reads, in one-letter code: UPF0181 protein VC_A0569 (53 aa).

The protein belongs to the UPF0181 family.

The polypeptide is UPF0181 protein VC_A0569 (Vibrio cholerae serotype O1 (strain ATCC 39315 / El Tor Inaba N16961)).